We begin with the raw amino-acid sequence, 271 residues long: NADPH-dependent 7-cyano-7-deazaguanine reductase (271 aa).

81 to 83 (IES) lines the substrate pocket. 83-84 (SK) provides a ligand contact to NADPH. C177 acts as the Thioimide intermediate in catalysis. The active-site Proton donor is the D184. 216–217 (HE) contributes to the substrate binding site. 245–246 (RG) serves as a coordination point for NADPH.

It belongs to the GTP cyclohydrolase I family. QueF type 2 subfamily. In terms of assembly, homodimer.

The protein localises to the cytoplasm. It carries out the reaction 7-aminomethyl-7-carbaguanine + 2 NADP(+) = 7-cyano-7-deazaguanine + 2 NADPH + 3 H(+). It functions in the pathway tRNA modification; tRNA-queuosine biosynthesis. Functionally, catalyzes the NADPH-dependent reduction of 7-cyano-7-deazaguanine (preQ0) to 7-aminomethyl-7-deazaguanine (preQ1). The polypeptide is NADPH-dependent 7-cyano-7-deazaguanine reductase (Xanthomonas axonopodis pv. citri (strain 306)).